A 122-amino-acid polypeptide reads, in one-letter code: MRQRGRATLLVALLLLVQLRPESSQWSPAAAAANVVQDPNLRWNPGVRNQGGGVRALLLLLAERFPRRAGSEPAGERQRRDDPPLSIDLTFHLLRTLLELARTQSQRERAEQNRIIFDSVGK.

A signal peptide spans 1-25 (MRQRGRATLLVALLLLVQLRPESSQ). Positions 26–80 (WSPAAAAANVVQDPNLRWNPGVRNQGGGVRALLLLLAERFPRRAGSEPAGERQRR) are excised as a propeptide. A Valine amide modification is found at valine 120.

The protein belongs to the sauvagine/corticotropin-releasing factor/urotensin I family. As to quaternary structure, interacts with CRHR1 and CRHR2 (via their N-terminal extracellular domain).

It is found in the secreted. In terms of biological role, acts in vitro to stimulate the secretion of adrenocorticotropic hormone (ACTH). Binds with high affinity to CRF receptor types 1, 2-alpha, and 2-beta. Plays a role in the establishment of normal hearing thresholds. Reduces food intake and regulates ghrelin levels in gastric body and plasma. This Rattus norvegicus (Rat) protein is Urocortin (Ucn).